The primary structure comprises 317 residues: L-lactate dehydrogenase (317 aa).

Residues Val17, Asp38, Lys43, Tyr69, and 83–84 (GA) contribute to the NAD(+) site. Residues Gln86 and Arg92 each coordinate substrate. Residues Ser105, 122–124 (ATN), and Ser147 contribute to the NAD(+) site. Residue 124-127 (NPVD) coordinates substrate. 152–155 (DTAR) is a binding site for substrate. Residues Arg157 and His172 each contribute to the beta-D-fructose 1,6-bisphosphate site. His179 (proton acceptor) is an active-site residue. Tyr224 carries the phosphotyrosine modification. Thr233 is a binding site for substrate.

It belongs to the LDH/MDH superfamily. LDH family. As to quaternary structure, homotetramer.

The protein localises to the cytoplasm. The enzyme catalyses (S)-lactate + NAD(+) = pyruvate + NADH + H(+). It functions in the pathway fermentation; pyruvate fermentation to lactate; (S)-lactate from pyruvate: step 1/1. Its activity is regulated as follows. Allosterically activated by fructose 1,6-bisphosphate (FBP). Functionally, catalyzes the conversion of lactate to pyruvate. In Geobacillus kaustophilus (strain HTA426), this protein is L-lactate dehydrogenase.